Here is a 345-residue protein sequence, read N- to C-terminus: C5a anaphylatoxin chemotactic receptor 1 (345 aa).

Residues 1 to 32 (MMVTVSYDYDYNSTFLPDGFVDNYVERLSFGD) lie on the Extracellular side of the membrane. Tyr9 and Tyr11 each carry sulfotyrosine. An N-linked (GlcNAc...) asparagine glycan is attached at Asn12. A helical membrane pass occupies residues 33 to 59 (LVAVVIMVVVFLVGVPGNALVVWVTAC). Over 60-64 (EARRH) the chain is Cytoplasmic. A helical membrane pass occupies residues 65–88 (INAIWFLNLAAADLLSCLALPILL). Residues 89–105 (VSTVHLNHWYFGDTACK) are Extracellular-facing. A disulfide bond links Cys104 and Cys183. A helical transmembrane segment spans residues 106 to 127 (VLPSLILLNMYTSILLLATISA). Over 128–148 (DRLLLVLSPIWCQRFRGGCLA) the chain is Cytoplasmic. A helical transmembrane segment spans residues 149–169 (WTACGLAWVLALLLSSPSFLY). Residues 170 to 195 (RRTHNEHFSFKVYCVTDYGRDISKER) lie on the Extracellular side of the membrane. A helical membrane pass occupies residues 196 to 221 (AVALVRLLVGFIVPLITLTACYTFLL). The Cytoplasmic portion of the chain corresponds to 222-237 (LRTWSRKATRSAKTVK). The chain crosses the membrane as a helical span at residues 238 to 260 (VVVAVVSSFFVFWLPYQVTGILL). Residues 261–277 (AWHSPNSATYRNTKALD) are Extracellular-facing. A helical transmembrane segment spans residues 278–298 (AVCVAFAYINCCINPIIYVVA). Residues 299-345 (GHGFQGRLLKSLPSVLRNVLTEESLDKRHQSFARSTVDTMPQKSESV) are Cytoplasmic-facing. Ser309, Ser312, Ser322, Ser329, and Ser333 each carry phosphoserine.

This sequence belongs to the G-protein coupled receptor 1 family. Homodimer. May also form higher-order oligomers. Interacts (when phosphorylated) with ARRB1 and ARRB2; the interaction is associated with internalization of C5aR. Sulfation plays a critical role in the association of C5aR with C5a, but no significant role in the ability of the receptor to transduce a signal and mobilize calcium in response to a small peptide agonist. Post-translationally, phosphorylated on serine residues in response to C5a binding, resulting in internalization of the receptor and short-term desensitization to C5a. Expressed strongly in macrophages and spleen. Weak expression detected in lung, liver, brain, heart and kidney.

It is found in the cell membrane. The protein resides in the cytoplasmic vesicle. Functionally, receptor for the chemotactic and inflammatory peptide anaphylatoxin C5a. The ligand interacts with at least two sites on the receptor: a high-affinity site on the extracellular N-terminus, and a second site in the transmembrane region which activates downstream signaling events. Receptor activation stimulates chemotaxis, granule enzyme release, intracellular calcium release and superoxide anion production. The chain is C5a anaphylatoxin chemotactic receptor 1 (C5AR1) from Cavia porcellus (Guinea pig).